A 155-amino-acid chain; its full sequence is MSLIPSFFGNNRRINNNIFDPFSLDVWDPFKELQFPSSSSSAIANARVDWKETAEAHVFKADLPGMKKEEVKVEIEDDSVLKISGERHVEKEEKQDTWHRVERSSGGFSRKFRLPENVKMDQVKASMENGVLTVTVPKVETNKKKAQVKSIDISG.

Residues 39–154 enclose the sHSP domain; it reads SSSAIANARV…KAQVKSIDIS (116 aa).

It belongs to the small heat shock protein (HSP20) family. In terms of assembly, forms oligomeric structures. Binds to AKR2A.

It localises to the cytoplasm. Its function is as follows. Possesses chaperone activity. This is 17.6 kDa class I heat shock protein 1 (HSP17.6A) from Arabidopsis thaliana (Mouse-ear cress).